Consider the following 195-residue polypeptide: uncharacterized protein (195 aa).

Residues 6–66 (VESRKRLLKA…ELITDFHSRV (61 aa)) enclose the HTH tetR-type domain. Residues 29 to 48 (KVSEIVKKAGFTQPSFYLYF) constitute a DNA-binding region (H-T-H motif).

This is an uncharacterized protein from Bacillus subtilis (strain 168).